Here is a 69-residue protein sequence, read N- to C-terminus: Calcium-binding protein (69 aa).

EF-hand domains follow at residues valine 2–proline 37 and phenylalanine 38–serine 69. Residues aspartate 15, aspartate 17, serine 19, lysine 21, glutamate 26, aspartate 51, aspartate 53, aspartate 55, glutamine 57, and glutamate 62 each coordinate Ca(2+).

The polypeptide is Calcium-binding protein (Schistosoma mansoni (Blood fluke)).